We begin with the raw amino-acid sequence, 375 residues long: Peptidyl-prolyl cis-trans isomerase D (375 aa).

The 163-residue stretch at 7–169 folds into the PPIase cyclophilin-type domain; that stretch reads YFDITIANEP…QEVTISSAGV (163 aa). 3 TPR repeats span residues 217-250, 270-307, and 312-345; these read AGKL…LDVH, LPLL…PNLS, and GKAL…VPGD.

It belongs to the cyclophilin-type PPIase family. PPIase D subfamily.

It localises to the cytoplasm. The catalysed reaction is [protein]-peptidylproline (omega=180) = [protein]-peptidylproline (omega=0). In terms of biological role, PPIases accelerate the folding of proteins. It catalyzes the cis-trans isomerization of proline imidic peptide bonds in oligopeptides. This chain is Peptidyl-prolyl cis-trans isomerase D (CPR6), found in Cryptococcus neoformans var. neoformans serotype D (strain B-3501A) (Filobasidiella neoformans).